Reading from the N-terminus, the 150-residue chain is UPF0756 membrane protein YPN_1328 (150 aa).

Transmembrane regions (helical) follow at residues 16 to 36, 51 to 71, 88 to 108, and 114 to 134; these read ALGI…LIAI, YGLT…IASG, ILAI…VSLM, and VVAG…GVPV.

The protein belongs to the UPF0756 family.

Its subcellular location is the cell membrane. The polypeptide is UPF0756 membrane protein YPN_1328 (Yersinia pestis bv. Antiqua (strain Nepal516)).